The following is a 599-amino-acid chain: Elongation factor 4 (599 aa).

In terms of domain architecture, tr-type G spans 2–184; the sequence is KNIRNFSIIA…RLVRDIPPPQ (183 aa). GTP is bound by residues 14–19 and 131–134; these read DHGKST and NKID.

This sequence belongs to the TRAFAC class translation factor GTPase superfamily. Classic translation factor GTPase family. LepA subfamily.

The protein localises to the cell inner membrane. The enzyme catalyses GTP + H2O = GDP + phosphate + H(+). Its function is as follows. Required for accurate and efficient protein synthesis under certain stress conditions. May act as a fidelity factor of the translation reaction, by catalyzing a one-codon backward translocation of tRNAs on improperly translocated ribosomes. Back-translocation proceeds from a post-translocation (POST) complex to a pre-translocation (PRE) complex, thus giving elongation factor G a second chance to translocate the tRNAs correctly. Binds to ribosomes in a GTP-dependent manner. This is Elongation factor 4 from Salmonella paratyphi A (strain ATCC 9150 / SARB42).